Here is a 116-residue protein sequence, read N- to C-terminus: Proline-rich protein 9 (116 aa).

The sequence is that of Proline-rich protein 9 (Prr9) from Mus musculus (Mouse).